The sequence spans 478 residues: MAKDKKFVEDITPMDEDFAQWYTDIVKKAELADYSSIKGCMIIRPNGYAIWENIQKYVDTKLKEYGHENVSMPIFIPENLLQKEKDHVEGFAPEVAWVTHGGDDELAERLCVRPTSETLFCEHYAKIVQSYKDLPKLYNQWCSVVRWEKTTRPFLRTTEFLWQEGHTIHETKEEAESHSLKILNMYSRLCEDMLAMPVVMGKKTEKEKFAGADDTYTIESLMHDGKALQAGTSHYLGQNFSKAFAIQFSDRNGKLEYPHYTTWAVTTRLIGAIIMVHGDDSGLKLPPRIAPTQAVIIPVAQHKEGVLEKAKELKEKLAKVVRVKLDDSDKMPGWKYSEYEMKGIPLRIEIGPKDIEKNQAVLVRRDNREKTIVSLDEIEIKVQEMLDTIHNSMLEEARKARDEKTYVATTMEEFEDIIENKPGFIKAMWCGDRACEDKIREVTGATSRCMPFEQEVVSDTCVCCGKKAKNLIYWGRAY.

The protein belongs to the class-II aminoacyl-tRNA synthetase family. ProS type 3 subfamily. In terms of assembly, homodimer.

The protein resides in the cytoplasm. The enzyme catalyses tRNA(Pro) + L-proline + ATP = L-prolyl-tRNA(Pro) + AMP + diphosphate. Catalyzes the attachment of proline to tRNA(Pro) in a two-step reaction: proline is first activated by ATP to form Pro-AMP and then transferred to the acceptor end of tRNA(Pro). This chain is Proline--tRNA ligase, found in Clostridium botulinum (strain Loch Maree / Type A3).